A 422-amino-acid polypeptide reads, in one-letter code: GTPase Obg (422 aa).

The region spanning 1-158 is the Obg domain; sequence MFYDRARIFV…RWLDLELKLL (158 aa). An OBG-type G domain is found at 159–329; the sequence is ADVGLVGFPN…LVYRVSALLE (171 aa). Residues 165-172, 190-194, 212-215, 282-285, and 310-312 each bind GTP; these read GFPNAGKS, FTTIT, DIPG, NKMD, and SAV. Mg(2+)-binding residues include serine 172 and threonine 192. In terms of domain architecture, OCT spans 337–422; the sequence is VPEALERPVI…IGDYEFEYVE (86 aa).

It belongs to the TRAFAC class OBG-HflX-like GTPase superfamily. OBG GTPase family. Monomer. Mg(2+) is required as a cofactor.

The protein localises to the cytoplasm. Its function is as follows. An essential GTPase which binds GTP, GDP and possibly (p)ppGpp with moderate affinity, with high nucleotide exchange rates and a fairly low GTP hydrolysis rate. Plays a role in control of the cell cycle, stress response, ribosome biogenesis and in those bacteria that undergo differentiation, in morphogenesis control. This is GTPase Obg from Pelotomaculum thermopropionicum (strain DSM 13744 / JCM 10971 / SI).